A 437-amino-acid polypeptide reads, in one-letter code: Amino-acid acetyltransferase (437 aa).

An N-acetyltransferase domain is found at Glu289–Asn437.

This sequence belongs to the acetyltransferase family. ArgA subfamily.

The protein localises to the cytoplasm. The enzyme catalyses L-glutamate + acetyl-CoA = N-acetyl-L-glutamate + CoA + H(+). The protein operates within amino-acid biosynthesis; L-arginine biosynthesis; N(2)-acetyl-L-ornithine from L-glutamate: step 1/4. This chain is Amino-acid acetyltransferase, found in Haemophilus ducreyi (strain 35000HP / ATCC 700724).